The following is a 338-amino-acid chain: UDP-N-acetylenolpyruvoylglucosamine reductase (338 aa).

Residues 17 to 188 enclose the FAD-binding PCMH-type domain; that stretch reads IAARTDWWID…MYVDYRLRLK (172 aa). The active site involves Arg-164. Ser-237 acts as the Proton donor in catalysis. Residue Glu-333 is part of the active site.

It belongs to the MurB family. FAD serves as cofactor.

The protein localises to the cytoplasm. It carries out the reaction UDP-N-acetyl-alpha-D-muramate + NADP(+) = UDP-N-acetyl-3-O-(1-carboxyvinyl)-alpha-D-glucosamine + NADPH + H(+). It participates in cell wall biogenesis; peptidoglycan biosynthesis. Functionally, cell wall formation. The protein is UDP-N-acetylenolpyruvoylglucosamine reductase of Porphyromonas gingivalis (strain ATCC BAA-308 / W83).